Here is a 131-residue protein sequence, read N- to C-terminus: Small ribosomal subunit protein uS11 (131 aa).

This sequence belongs to the universal ribosomal protein uS11 family. As to quaternary structure, part of the 30S ribosomal subunit. Interacts with proteins S7 and S18. Binds to IF-3.

In terms of biological role, located on the platform of the 30S subunit, it bridges several disparate RNA helices of the 16S rRNA. Forms part of the Shine-Dalgarno cleft in the 70S ribosome. This Exiguobacterium sibiricum (strain DSM 17290 / CCUG 55495 / CIP 109462 / JCM 13490 / 255-15) protein is Small ribosomal subunit protein uS11.